The chain runs to 1220 residues: DNA-directed RNA polymerase subunit beta' (1220 aa).

C61, C63, C76, and C79 together coordinate Zn(2+). Mg(2+) contacts are provided by D450, D452, and D454. The interval 1197–1220 (QPEVEQEPTPDIPKLDDVAKSFEE) is disordered. Basic and acidic residues predominate over residues 1209–1220 (PKLDDVAKSFEE).

Belongs to the RNA polymerase beta' chain family. As to quaternary structure, the RNAP catalytic core consists of 2 alpha, 1 beta, 1 beta' and 1 omega subunit. When a sigma factor is associated with the core the holoenzyme is formed, which can initiate transcription. Requires Mg(2+) as cofactor. Zn(2+) is required as a cofactor.

The catalysed reaction is RNA(n) + a ribonucleoside 5'-triphosphate = RNA(n+1) + diphosphate. Its function is as follows. DNA-dependent RNA polymerase catalyzes the transcription of DNA into RNA using the four ribonucleoside triphosphates as substrates. In Leuconostoc citreum (strain KM20), this protein is DNA-directed RNA polymerase subunit beta'.